Consider the following 302-residue polypeptide: MTNISLDKLVTESRNENTKDIDRVETLEMLKMINDEDKKVAEAVEKELINIAKAVDKIGESFLNGGRLIYVGAGTSGRLGVLDASECPPTYGVSYDLVRGIIAGGESAMFKAREGAEDSKKLCIKDLKNVNFGENDILVGIAASGRTPYVIGGLEYANGIGATTISVTCNPESEMSKIANISIAPVVGPEAITGSTRMKAGTAQKMVLNMLSTGAMVKTGKVYGNLMVDLKATNEKLVERAKRIVMQATGSKREQVEKILKETNFDVKLSIFMIESSLDKIKAKEILDKNKGYIVEAIKEIS.

The SIS domain occupies 58 to 221 (IGESFLNGGR…STGAMVKTGK (164 aa)). Glu-86 (proton donor) is an active-site residue. Residue Glu-117 is part of the active site.

This sequence belongs to the GCKR-like family. MurNAc-6-P etherase subfamily. Homodimer.

It carries out the reaction N-acetyl-D-muramate 6-phosphate + H2O = N-acetyl-D-glucosamine 6-phosphate + (R)-lactate. It functions in the pathway amino-sugar metabolism; N-acetylmuramate degradation. Specifically catalyzes the cleavage of the D-lactyl ether substituent of MurNAc 6-phosphate, producing GlcNAc 6-phosphate and D-lactate. The polypeptide is N-acetylmuramic acid 6-phosphate etherase (Clostridium botulinum (strain Okra / Type B1)).